The chain runs to 364 residues: Long-wave-sensitive opsin 1 (364 aa).

The Extracellular segment spans residues 1–52 (MAQRWGPQKLAGGQPQAGFEDSTQASIFTYTNNNATRDPFEGPNYHIAPRWV). Residue serine 22 is glycosylated (O-linked (GlcNAc) serine). A glycan (N-linked (GlcNAc...) asparagine) is linked at asparagine 34. The helical transmembrane segment at 53–77 (YHVTSAWMIFVVIASVFTNGLVLAA) threads the bilayer. Residues 78–89 (TMRFKKLRHPLN) are Cytoplasmic-facing. Residues 90-115 (WILVNLAVADLAETIIASTISVVNQI) traverse the membrane as a helical segment. Residues 116–129 (YGYFVLGHPMCVVE) lie on the Extracellular side of the membrane. Cysteines 126 and 203 form a disulfide. A helical transmembrane segment spans residues 130–149 (GYTVSLCGITGLWSLAIISW). The Cytoplasmic portion of the chain corresponds to 150 to 168 (ERWMVVCKPFGNVRFDAKL). A helical membrane pass occupies residues 169–192 (AVAGIAFSWIWAAVWTAPPIFGWS). The Extracellular segment spans residues 193–218 (RYWPHGLKTSCGPDVFSGSSYPGVQS). The chain crosses the membrane as a helical span at residues 219–246 (YMIVLMITCCIIPLSVIVLCYLQVWLAI). Over 247–268 (RAVAKQQKESESTQKAEKEVTR) the chain is Cytoplasmic. The helical transmembrane segment at 269-292 (MVMVMVFAFCLCWGPYTFFACFAA) threads the bilayer. Residues 293 to 300 (AHPGYAFH) are Extracellular-facing. A helical transmembrane segment spans residues 301-325 (PLVAALPAYFAKSATIYNPIIYVFM). The residue at position 312 (lysine 312) is an N6-(retinylidene)lysine. Residues 326-364 (NRQFRNCILQLFGKKVDDSSELSSVSKTEASSVSSVSPA) are Cytoplasmic-facing.

Belongs to the G-protein coupled receptor 1 family. Opsin subfamily. Phosphorylated on some or all of the serine and threonine residues present in the C-terminal region. As to expression, the three color pigments are found in the cone photoreceptor cells. Expressed in retina.

The protein resides in the membrane. In terms of biological role, visual pigments are the light-absorbing molecules that mediate vision. They consist of an apoprotein, opsin, covalently linked to cis-retinal. The sequence is that of Long-wave-sensitive opsin 1 (OPN1LW) from Equus caballus (Horse).